The chain runs to 335 residues: Glyceraldehyde-3-phosphate dehydrogenase (335 aa).

Residues 10-11 (RI), Asp33, Arg77, and Ser119 each bind NAD(+). D-glyceraldehyde 3-phosphate is bound by residues 150–152 (SCT), Thr181, 210–211 (TG), and Arg233. Cys151 serves as the catalytic Nucleophile. Asn315 contacts NAD(+).

Belongs to the glyceraldehyde-3-phosphate dehydrogenase family. In terms of assembly, homotetramer.

The protein resides in the cytoplasm. It carries out the reaction D-glyceraldehyde 3-phosphate + phosphate + NAD(+) = (2R)-3-phospho-glyceroyl phosphate + NADH + H(+). It functions in the pathway carbohydrate degradation; glycolysis; pyruvate from D-glyceraldehyde 3-phosphate: step 1/5. In terms of biological role, catalyzes the oxidative phosphorylation of glyceraldehyde 3-phosphate (G3P) to 1,3-bisphosphoglycerate (BPG) using the cofactor NAD. The first reaction step involves the formation of a hemiacetal intermediate between G3P and a cysteine residue, and this hemiacetal intermediate is then oxidized to a thioester, with concomitant reduction of NAD to NADH. The reduced NADH is then exchanged with the second NAD, and the thioester is attacked by a nucleophilic inorganic phosphate to produce BPG. This Chlamydia pneumoniae (Chlamydophila pneumoniae) protein is Glyceraldehyde-3-phosphate dehydrogenase (gap).